We begin with the raw amino-acid sequence, 313 residues long: Probable pyridoxal 5'-phosphate synthase subunit PDX1.2 (313 aa).

Position 42 (Asp42) interacts with D-ribose 5-phosphate. The Schiff-base intermediate with D-ribose 5-phosphate role is filled by Lys99. Gly171 contacts D-ribose 5-phosphate. Arg183 serves as a coordination point for D-glyceraldehyde 3-phosphate. D-ribose 5-phosphate contacts are provided by residues Gly232 and 253–254 (GS).

It belongs to the PdxS/SNZ family.

The enzyme catalyses aldehydo-D-ribose 5-phosphate + D-glyceraldehyde 3-phosphate + L-glutamine = pyridoxal 5'-phosphate + L-glutamate + phosphate + 3 H2O + H(+). Its pathway is cofactor biosynthesis; pyridoxal 5'-phosphate biosynthesis. Catalyzes the formation of pyridoxal 5'-phosphate from ribose 5-phosphate (RBP), glyceraldehyde 3-phosphate (G3P) and ammonia. The ammonia is provided by PDX2. Can also use ribulose 5-phosphate and dihydroxyacetone phosphate as substrates, resulting from enzyme-catalyzed isomerization of RBP and G3P, respectively. Also plays an indirect role in resistance to singlet oxygen-generating photosensitizers. In Oryza sativa subsp. japonica (Rice), this protein is Probable pyridoxal 5'-phosphate synthase subunit PDX1.2 (PDX12).